Here is a 156-residue protein sequence, read N- to C-terminus: Ribosomal RNA large subunit methyltransferase H (156 aa).

Residues leucine 73, glycine 104, and 123–128 (VSSLTL) each bind S-adenosyl-L-methionine.

This sequence belongs to the RNA methyltransferase RlmH family. As to quaternary structure, homodimer.

It is found in the cytoplasm. It carries out the reaction pseudouridine(1915) in 23S rRNA + S-adenosyl-L-methionine = N(3)-methylpseudouridine(1915) in 23S rRNA + S-adenosyl-L-homocysteine + H(+). In terms of biological role, specifically methylates the pseudouridine at position 1915 (m3Psi1915) in 23S rRNA. This Burkholderia thailandensis (strain ATCC 700388 / DSM 13276 / CCUG 48851 / CIP 106301 / E264) protein is Ribosomal RNA large subunit methyltransferase H.